A 173-amino-acid chain; its full sequence is Large ribosomal subunit protein uL16 (173 aa).

This sequence belongs to the universal ribosomal protein uL16 family.

This chain is Large ribosomal subunit protein uL16, found in Methanococcus maripaludis (strain C5 / ATCC BAA-1333).